Consider the following 1035-residue polypeptide: Retinoblastoma-related protein (1035 aa).

Residues 403-426 are disordered; that stretch reads ITSPLSPHRSPASHANGIPGSANS. Positions 431 to 632 are domain A; the sequence is TPVSTAMTTA…EKGSSLYNSL (202 aa). A pocket region spans residues 431–885; that stretch reads TPVSTAMTTA…NEIFIPAAKP (455 aa). A spacer region spans residues 633–753; it reads TVARPALSAE…PGGGGETCAE (121 aa). Disordered stretches follow at residues 674 to 697 and 721 to 748; these read PSLQ…PKRP and GNLK…GGGG. The segment at 754-885 is domain B; the sequence is TGINVFFTKI…NEIFIPAAKP (132 aa).

This sequence belongs to the retinoblastoma protein (RB) family.

The protein resides in the nucleus. Its function is as follows. Regulator of biological processes that recruits a histone deacetylase to control gene transcription. May play a role in the entry into mitosis, negatively regulating the cell proliferation. Formation of stable complexes with geminiviridae replication-associated proteins may create a cellular environment which favors viral DNA replication. The sequence is that of Retinoblastoma-related protein (RBL901) from Populus trichocarpa (Western balsam poplar).